The chain runs to 422 residues: Zinc finger protein 550 (422 aa).

One can recognise a KRAB domain in the interval 12-83 (VTFKDVAVTF…KRGLSHATCA (72 aa)). The tract at residues 113-158 (LESSTSSDSRLGRARDEEGLLEMQKGKVTPETDLHKETHLGKVSLE) is disordered. The segment covering 122 to 152 (RLGRARDEEGLLEMQKGKVTPETDLHKETHL) has biased composition (basic and acidic residues). C2H2-type zinc fingers lie at residues 203–225 (YKCKQCGKGFNRKWYLVRHQRVH), 231–253 (YECNACGKAFSQSSTLIRHYLIH), 259–281 (YKCLECGKAFKRRSYLMQHHPIH), 287–309 (YECSQCRKAFTHRSTFIRHNRTH), 315–337 (FECKECEKAFSNRAHLIQHYIIH), 343–365 (YDCMACGKAFRCSSELIQHQRIH), 371–393 (YECTQCGKAFHRSTYLIQHSVIH), and 399–421 (YKCIECGKAFKRRSHLLQHQRVH).

This sequence belongs to the krueppel C2H2-type zinc-finger protein family.

It is found in the nucleus. Functionally, may be involved in transcriptional regulation. The sequence is that of Zinc finger protein 550 (ZNF550) from Homo sapiens (Human).